Here is a 162-residue protein sequence, read N- to C-terminus: Troponin C, skeletal muscle (162 aa).

EF-hand domains lie at 17 to 52, 53 to 88, 93 to 128, and 129 to 162; these read EMIA…LGQN, PTKE…QMKE, KSEE…TGEH, and VTEE…EGVQ. 18 residues coordinate Ca(2+): D30, D32, D36, E41, D66, D68, S70, T72, E77, D106, N108, D110, E117, D142, N144, D146, R148, and E153.

It belongs to the troponin C family.

In terms of biological role, troponin is the central regulatory protein of striated muscle contraction. Tn consists of three components: Tn-I which is the inhibitor of actomyosin ATPase, Tn-T which contains the binding site for tropomyosin and Tn-C. The binding of calcium to Tn-C abolishes the inhibitory action of Tn on actin filaments. The chain is Troponin C, skeletal muscle (TNNC2) from Meleagris gallopavo (Wild turkey).